We begin with the raw amino-acid sequence, 61 residues long: uncharacterized protein (61 aa).

A signal peptide spans 1 to 30; the sequence is MDVEVANMAAKLRVRGLKLPNAIVVSTAIL.

This is an uncharacterized protein from Archaeoglobus fulgidus (strain ATCC 49558 / DSM 4304 / JCM 9628 / NBRC 100126 / VC-16).